A 426-amino-acid polypeptide reads, in one-letter code: Enolase (426 aa).

The interval 38–60 is disordered; sequence PSGASTGAHEAVEKRDGDKSRYG. The segment covering 47–58 has biased composition (basic and acidic residues); the sequence is EAVEKRDGDKSR. Glutamine 163 is a binding site for (2R)-2-phosphoglycerate. Glutamate 205 acts as the Proton donor in catalysis. Mg(2+) contacts are provided by aspartate 242, glutamate 285, and aspartate 312. Residues lysine 337, arginine 366, serine 367, and lysine 388 each contribute to the (2R)-2-phosphoglycerate site. Lysine 337 serves as the catalytic Proton acceptor.

The protein belongs to the enolase family. Mg(2+) serves as cofactor.

The protein localises to the cytoplasm. The protein resides in the secreted. It is found in the cell surface. It carries out the reaction (2R)-2-phosphoglycerate = phosphoenolpyruvate + H2O. Its pathway is carbohydrate degradation; glycolysis; pyruvate from D-glyceraldehyde 3-phosphate: step 4/5. Catalyzes the reversible conversion of 2-phosphoglycerate (2-PG) into phosphoenolpyruvate (PEP). It is essential for the degradation of carbohydrates via glycolysis. This chain is Enolase, found in Caulobacter sp. (strain K31).